A 216-amino-acid polypeptide reads, in one-letter code: Splicing factor U2AF 23 kDa subunit (216 aa).

A C3H1-type 1 zinc finger spans residues 12 to 40 (EQDKVNCSFYYKIGACRHGERCSRKHVKP). The region spanning 44 to 141 (QTILCPNMYK…RPVYAELSPV (98 aa)) is the RRM domain. A C3H1-type 2 zinc finger spans residues 143 to 170 (DFREACCRQHETSECQRGGLCNFMHAKK). The tract at residues 194 to 216 (EMKKEPNSDSTNRWVSVTAERKN) is disordered.

As to quaternary structure, forms a heterodimer with the U2AF large subunit. Can also form a homodimer. U2AF large subunit (U2AF59), U2AF small subunit (U2AF23) and SF1 (bpb1) interact to form a complex required for complex A formation. Interacts with cwf13.

It is found in the nucleus. Functionally, necessary for the splicing of pre-mRNA. The SF1-U2AF59-U2AF23 complex has a role in the recognition of the branch site (5'-UACUAAC-3'), the pyrimidine tract and the 3'-splice site at the 3'-end of introns. This chain is Splicing factor U2AF 23 kDa subunit, found in Schizosaccharomyces pombe (strain 972 / ATCC 24843) (Fission yeast).